A 209-amino-acid polypeptide reads, in one-letter code: Imidazoleglycerol-phosphate dehydratase (209 aa).

Belongs to the imidazoleglycerol-phosphate dehydratase family.

The protein localises to the cytoplasm. It catalyses the reaction D-erythro-1-(imidazol-4-yl)glycerol 3-phosphate = 3-(imidazol-4-yl)-2-oxopropyl phosphate + H2O. The protein operates within amino-acid biosynthesis; L-histidine biosynthesis; L-histidine from 5-phospho-alpha-D-ribose 1-diphosphate: step 6/9. This is Imidazoleglycerol-phosphate dehydratase from Paracidovorax citrulli (strain AAC00-1) (Acidovorax citrulli).